Here is a 249-residue protein sequence, read N- to C-terminus: ATP synthase subunit a (249 aa).

5 consecutive transmembrane segments (helical) span residues 33 to 53 (GQVFLTSWFVIAALVVLSLLA), 92 to 112 (VPFIGTLFLFIFLSNWSGALI), 131 to 151 (INTTVALALLTSLAYFYAGFS), 196 to 216 (LVVAVLVLLVPLFVPLPAMIL), and 217 to 237 (GLFTSAIQALIFATLAASYIG).

This sequence belongs to the ATPase A chain family. In terms of assembly, F-type ATPases have 2 components, CF(1) - the catalytic core - and CF(0) - the membrane proton channel. CF(1) has five subunits: alpha(3), beta(3), gamma(1), delta(1), epsilon(1). CF(0) has four main subunits: a, b, b' and c.

The protein localises to the cellular thylakoid membrane. Functionally, key component of the proton channel; it plays a direct role in the translocation of protons across the membrane. This Synechococcus elongatus (strain ATCC 33912 / PCC 7942 / FACHB-805) (Anacystis nidulans R2) protein is ATP synthase subunit a.